Here is a 65-residue protein sequence, read N- to C-terminus: Putative beta-neurotoxin RjAa8 (65 aa).

In terms of domain architecture, LCN-type CS-alpha/beta spans 1–64 (KEGYPMGRDG…VWDSSTNKCG (64 aa)). 4 disulfide bridges follow: Cys-11/Cys-63, Cys-15/Cys-37, Cys-22/Cys-44, and Cys-26/Cys-46.

This sequence belongs to the long (4 C-C) scorpion toxin superfamily. Sodium channel inhibitor family. Beta subfamily. As to expression, expressed by the venom gland.

The protein localises to the secreted. Functionally, beta toxins bind voltage-independently at site-4 of sodium channels (Nav) and shift the voltage of activation toward more negative potentials thereby affecting sodium channel activation and promoting spontaneous and repetitive firing. The chain is Putative beta-neurotoxin RjAa8 from Rhopalurus junceus (Caribbean blue scorpion).